The sequence spans 196 residues: dTTP/UTP pyrophosphatase (196 aa).

Asp72 serves as the catalytic Proton acceptor.

The protein belongs to the Maf family. YhdE subfamily. The cofactor is a divalent metal cation.

It localises to the cytoplasm. The enzyme catalyses dTTP + H2O = dTMP + diphosphate + H(+). The catalysed reaction is UTP + H2O = UMP + diphosphate + H(+). In terms of biological role, nucleoside triphosphate pyrophosphatase that hydrolyzes dTTP and UTP. May have a dual role in cell division arrest and in preventing the incorporation of modified nucleotides into cellular nucleic acids. This chain is dTTP/UTP pyrophosphatase, found in Chlamydia trachomatis serovar A (strain ATCC VR-571B / DSM 19440 / HAR-13).